The primary structure comprises 291 residues: MSYLKKPDWLKIRVKADQKIDDVIEILKMFSLHTVCEEAQCPNIYECFSKKTATFLIMGDVCTRNCTFCDVKKGKPVKLNSDEPKMVANAVGALGLKYVVITSVTRDDLPDGGASHFAECIRSIKGKRPYTKIEVLIPDFKGSFESVSKVVEASPDVVAHNIETIERLYPCVRPLASYKRSLDVLRMVKEIDKNIFTKSGIMVGLGETKDEVKKALEDLRNAECDFVTIGQYLSPSKNHHPVVEFVHPDVFEEYKEFAISIGFKFVMSGPLVRSSYMAENTKDIIENVRKI.

[4Fe-4S] cluster contacts are provided by Cys36, Cys41, Cys47, Cys62, Cys66, Cys69, and Ser275. The Radical SAM core domain maps to Phe48–Lys264.

The protein belongs to the radical SAM superfamily. Lipoyl synthase family. Requires [4Fe-4S] cluster as cofactor.

The protein resides in the cytoplasm. The catalysed reaction is [[Fe-S] cluster scaffold protein carrying a second [4Fe-4S](2+) cluster] + N(6)-octanoyl-L-lysyl-[protein] + 2 oxidized [2Fe-2S]-[ferredoxin] + 2 S-adenosyl-L-methionine + 4 H(+) = [[Fe-S] cluster scaffold protein] + N(6)-[(R)-dihydrolipoyl]-L-lysyl-[protein] + 4 Fe(3+) + 2 hydrogen sulfide + 2 5'-deoxyadenosine + 2 L-methionine + 2 reduced [2Fe-2S]-[ferredoxin]. Its pathway is protein modification; protein lipoylation via endogenous pathway; protein N(6)-(lipoyl)lysine from octanoyl-[acyl-carrier-protein]: step 2/2. In terms of biological role, catalyzes the radical-mediated insertion of two sulfur atoms into the C-6 and C-8 positions of the octanoyl moiety bound to the lipoyl domains of lipoate-dependent enzymes, thereby converting the octanoylated domains into lipoylated derivatives. The protein is Lipoyl synthase of Caldicellulosiruptor bescii (strain ATCC BAA-1888 / DSM 6725 / KCTC 15123 / Z-1320) (Anaerocellum thermophilum).